Here is a 69-residue protein sequence, read N- to C-terminus: DNA-directed RNA polymerase subunit omega (69 aa).

It belongs to the RNA polymerase subunit omega family. The RNAP catalytic core consists of 2 alpha, 1 beta, 1 beta' and 1 omega subunit. When a sigma factor is associated with the core the holoenzyme is formed, which can initiate transcription.

It carries out the reaction RNA(n) + a ribonucleoside 5'-triphosphate = RNA(n+1) + diphosphate. Functionally, promotes RNA polymerase assembly. Latches the N- and C-terminal regions of the beta' subunit thereby facilitating its interaction with the beta and alpha subunits. This chain is DNA-directed RNA polymerase subunit omega, found in Heliobacterium modesticaldum (strain ATCC 51547 / Ice1).